We begin with the raw amino-acid sequence, 287 residues long: Nucleotide-binding protein Gbem_0872 (287 aa).

Position 8 to 15 (8 to 15 (GLSGSGKS)) interacts with ATP. Residue 59–62 (DIRS) coordinates GTP.

The protein belongs to the RapZ-like family.

In terms of biological role, displays ATPase and GTPase activities. The polypeptide is Nucleotide-binding protein Gbem_0872 (Citrifermentans bemidjiense (strain ATCC BAA-1014 / DSM 16622 / JCM 12645 / Bem) (Geobacter bemidjiensis)).